The chain runs to 252 residues: uncharacterized protein (252 aa).

This is an uncharacterized protein from Saccharolobus islandicus (Sulfolobus islandicus).